A 93-amino-acid chain; its full sequence is Pyrimidine/purine nucleoside phosphorylase (93 aa).

This sequence belongs to the nucleoside phosphorylase PpnP family.

The catalysed reaction is a purine D-ribonucleoside + phosphate = a purine nucleobase + alpha-D-ribose 1-phosphate. It carries out the reaction adenosine + phosphate = alpha-D-ribose 1-phosphate + adenine. The enzyme catalyses cytidine + phosphate = cytosine + alpha-D-ribose 1-phosphate. It catalyses the reaction guanosine + phosphate = alpha-D-ribose 1-phosphate + guanine. The catalysed reaction is inosine + phosphate = alpha-D-ribose 1-phosphate + hypoxanthine. It carries out the reaction thymidine + phosphate = 2-deoxy-alpha-D-ribose 1-phosphate + thymine. The enzyme catalyses uridine + phosphate = alpha-D-ribose 1-phosphate + uracil. It catalyses the reaction xanthosine + phosphate = alpha-D-ribose 1-phosphate + xanthine. Its function is as follows. Catalyzes the phosphorolysis of diverse nucleosides, yielding D-ribose 1-phosphate and the respective free bases. Can use uridine, adenosine, guanosine, cytidine, thymidine, inosine and xanthosine as substrates. Also catalyzes the reverse reactions. In Tolumonas auensis (strain DSM 9187 / NBRC 110442 / TA 4), this protein is Pyrimidine/purine nucleoside phosphorylase.